A 299-amino-acid polypeptide reads, in one-letter code: Oxygen-dependent coproporphyrinogen-III oxidase (299 aa).

Residue serine 92 participates in substrate binding. The a divalent metal cation site is built by histidine 96 and histidine 106. The Proton donor role is filled by histidine 106. A substrate-binding site is contributed by 108–110; that stretch reads NVR. Histidine 145 and histidine 175 together coordinate a divalent metal cation. The important for dimerization stretch occupies residues 240–275; sequence YVEFNLVWDRGTLFGLQTGGRTESILMSMPPLVRWE. Substrate is bound at residue 258-260; the sequence is GGR.

Belongs to the aerobic coproporphyrinogen-III oxidase family. In terms of assembly, homodimer. A divalent metal cation is required as a cofactor.

The protein resides in the cytoplasm. It catalyses the reaction coproporphyrinogen III + O2 + 2 H(+) = protoporphyrinogen IX + 2 CO2 + 2 H2O. It functions in the pathway porphyrin-containing compound metabolism; protoporphyrin-IX biosynthesis; protoporphyrinogen-IX from coproporphyrinogen-III (O2 route): step 1/1. In terms of biological role, involved in the heme biosynthesis. Catalyzes the aerobic oxidative decarboxylation of propionate groups of rings A and B of coproporphyrinogen-III to yield the vinyl groups in protoporphyrinogen-IX. The protein is Oxygen-dependent coproporphyrinogen-III oxidase of Salmonella heidelberg (strain SL476).